We begin with the raw amino-acid sequence, 329 residues long: Beta-ketoacyl-[acyl-carrier-protein] synthase III (329 aa).

Catalysis depends on residues Cys-113 and His-255. Residues 256–260 are ACP-binding; that stretch reads QANQR. Asn-285 is an active-site residue.

Belongs to the thiolase-like superfamily. FabH family. In terms of assembly, homodimer.

It localises to the cytoplasm. It carries out the reaction malonyl-[ACP] + acetyl-CoA + H(+) = 3-oxobutanoyl-[ACP] + CO2 + CoA. The protein operates within lipid metabolism; fatty acid biosynthesis. Functionally, catalyzes the condensation reaction of fatty acid synthesis by the addition to an acyl acceptor of two carbons from malonyl-ACP. Catalyzes the first condensation reaction which initiates fatty acid synthesis and may therefore play a role in governing the total rate of fatty acid production. Possesses both acetoacetyl-ACP synthase and acetyl transacylase activities. Its substrate specificity determines the biosynthesis of branched-chain and/or straight-chain of fatty acids. The polypeptide is Beta-ketoacyl-[acyl-carrier-protein] synthase III (Chlorobaculum tepidum (strain ATCC 49652 / DSM 12025 / NBRC 103806 / TLS) (Chlorobium tepidum)).